A 349-amino-acid chain; its full sequence is Ribosomal RNA large subunit methyltransferase M (349 aa).

Residues Ser183, 216-219 (APGG), Asp235, Asp255, and Asp271 contribute to the S-adenosyl-L-methionine site. Lys300 acts as the Proton acceptor in catalysis.

This sequence belongs to the class I-like SAM-binding methyltransferase superfamily. RNA methyltransferase RlmE family. RlmM subfamily. As to quaternary structure, monomer.

Its subcellular location is the cytoplasm. It carries out the reaction cytidine(2498) in 23S rRNA + S-adenosyl-L-methionine = 2'-O-methylcytidine(2498) in 23S rRNA + S-adenosyl-L-homocysteine + H(+). Functionally, catalyzes the 2'-O-methylation at nucleotide C2498 in 23S rRNA. The chain is Ribosomal RNA large subunit methyltransferase M from Stutzerimonas stutzeri (strain A1501) (Pseudomonas stutzeri).